Consider the following 106-residue polypeptide: uncharacterized protein (106 aa).

A signal peptide spans 1–25 (MSVIKKNIPAIGLCICAFFIHSAVG).

To the N-terminal of the FimA/PapA family of fimbria proteins.

This is an uncharacterized protein from Salmonella typhi.